Reading from the N-terminus, the 703-residue chain is Capsid vertex component 1 (703 aa).

Residues 200-246 (LGESASPRPQPLARPHAGAPADPPIVGASDPPISPEEQLTAPGGDTT) form a disordered region.

The protein belongs to the herpesviridae CVC1 protein family. Interacts (via C-terminus) with capsid vertex component 2/CVC2.

It localises to the virion. The protein resides in the host nucleus. Capsid vertex-specific component that plays a role during viral DNA encapsidation, assuring correct genome cleavage and presumably stabilizing capsids that contain full-length viral genomes. The polypeptide is Capsid vertex component 1 (Human herpesvirus 1 (strain 17) (HHV-1)).